A 367-amino-acid chain; its full sequence is Methylthioribose-1-phosphate isomerase (367 aa).

Residues 48 to 50 (RGA), arginine 91, and glutamine 215 each bind substrate. The Proton donor role is filled by aspartate 256. 266 to 267 (NK) lines the substrate pocket.

The protein belongs to the eIF-2B alpha/beta/delta subunits family. MtnA subfamily.

It catalyses the reaction 5-(methylsulfanyl)-alpha-D-ribose 1-phosphate = 5-(methylsulfanyl)-D-ribulose 1-phosphate. It functions in the pathway amino-acid biosynthesis; L-methionine biosynthesis via salvage pathway; L-methionine from S-methyl-5-thio-alpha-D-ribose 1-phosphate: step 1/6. Functionally, catalyzes the interconversion of methylthioribose-1-phosphate (MTR-1-P) into methylthioribulose-1-phosphate (MTRu-1-P). This is Methylthioribose-1-phosphate isomerase from Syntrophus aciditrophicus (strain SB).